Reading from the N-terminus, the 89-residue chain is Neuropeptide F (89 aa).

The first 29 residues, 1 to 29 (MASGTFTQRLLVALMIFALIADLSTLVAA), serve as a signal peptide directing secretion. Phe-61 is subject to Phenylalanine amide. The propeptide occupies 65-89 (GGYLNPAIFGQDEQEVDWQDSTFSR).

Belongs to the NPY family.

Its subcellular location is the secreted. Functionally, an integral part of the sensory system that mediates food signaling, providing the neural basis for the regulation of food response; coordinates larval foraging and social behavior changes during development. May have a hormonal role in females. The sequence is that of Neuropeptide F from Anopheles gambiae (African malaria mosquito).